We begin with the raw amino-acid sequence, 78 residues long: DNA gyrase inhibitor YacG (78 aa).

Zn(2+) contacts are provided by Cys7, Cys10, Cys26, and Cys30.

This sequence belongs to the DNA gyrase inhibitor YacG family. In terms of assembly, interacts with GyrB. The cofactor is Zn(2+).

Its function is as follows. Inhibits all the catalytic activities of DNA gyrase by preventing its interaction with DNA. Acts by binding directly to the C-terminal domain of GyrB, which probably disrupts DNA binding by the gyrase. The chain is DNA gyrase inhibitor YacG from Colwellia psychrerythraea (strain 34H / ATCC BAA-681) (Vibrio psychroerythus).